A 394-amino-acid chain; its full sequence is Elongation factor Tu (394 aa).

The 195-residue stretch at 10–204 folds into the tr-type G domain; sequence KPHVNVGTIG…HLDTYIPEPE (195 aa). Residues 19–26 are G1; it reads GHVDHGKT. GTP is bound at residue 19 to 26; sequence GHVDHGKT. T26 contacts Mg(2+). Positions 60–64 are G2; it reads GITIN. The segment at 81 to 84 is G3; it reads DCPG. GTP contacts are provided by residues 81 to 85 and 136 to 139; these read DCPGH and NKCD. Residues 136–139 are G4; the sequence is NKCD. A G5 region spans residues 174 to 176; it reads SAL.

The protein belongs to the TRAFAC class translation factor GTPase superfamily. Classic translation factor GTPase family. EF-Tu/EF-1A subfamily. In terms of assembly, monomer.

The protein localises to the cytoplasm. The catalysed reaction is GTP + H2O = GDP + phosphate + H(+). Its function is as follows. GTP hydrolase that promotes the GTP-dependent binding of aminoacyl-tRNA to the A-site of ribosomes during protein biosynthesis. This is Elongation factor Tu from Aeromonas salmonicida (strain A449).